The sequence spans 162 residues: Cyclic pyranopterin monophosphate synthase (162 aa).

Substrate contacts are provided by residues 75 to 77 and 113 to 114; these read LCH and ME. The active site involves aspartate 128.

This sequence belongs to the MoaC family. In terms of assembly, homohexamer; trimer of dimers.

It carries out the reaction (8S)-3',8-cyclo-7,8-dihydroguanosine 5'-triphosphate = cyclic pyranopterin phosphate + diphosphate. The protein operates within cofactor biosynthesis; molybdopterin biosynthesis. In terms of biological role, catalyzes the conversion of (8S)-3',8-cyclo-7,8-dihydroguanosine 5'-triphosphate to cyclic pyranopterin monophosphate (cPMP). This Burkholderia ambifaria (strain MC40-6) protein is Cyclic pyranopterin monophosphate synthase.